The primary structure comprises 314 residues: Serine/threonine-protein phosphatase PP-Y (314 aa).

Mn(2+)-binding residues include aspartate 60, histidine 62, aspartate 88, and asparagine 120. The active-site Proton donor is histidine 121. Mn(2+) contacts are provided by histidine 169 and histidine 244.

This sequence belongs to the PPP phosphatase family. PP-Y subfamily. It depends on Mn(2+) as a cofactor.

The enzyme catalyses O-phospho-L-seryl-[protein] + H2O = L-seryl-[protein] + phosphate. The catalysed reaction is O-phospho-L-threonyl-[protein] + H2O = L-threonyl-[protein] + phosphate. The sequence is that of Serine/threonine-protein phosphatase PP-Y (PpY-55A) from Drosophila melanogaster (Fruit fly).